Here is a 395-residue protein sequence, read N- to C-terminus: Mitogen-activated protein kinase 6 (395 aa).

The tract at residues 1-35 is disordered; it reads MDGGSGQPAADTEMTEAPGGFPAAAPSPQMPGIEN. Residues 17–27 show a composition bias toward low complexity; sequence APGGFPAAAPS. In terms of domain architecture, Protein kinase spans 63–348; the sequence is KPPIMPIGKG…VLDALAHPYL (286 aa). Residues 69–77 and K92 each bind ATP; that span reads IGKGAYGIV. The active-site Proton acceptor is the D189. A Phosphothreonine modification is found at T221. Positions 221 to 223 match the TXY motif; that stretch reads TEY. A Phosphotyrosine modification is found at Y223. Residue T226 is modified to Phosphothreonine.

This sequence belongs to the protein kinase superfamily. CMGC Ser/Thr protein kinase family. MAP kinase subfamily. As to quaternary structure, interacts with MEKK1, MKK1 and MKK2. May form a ternary complex with MEKK1 and MKK1 or MKK2. Interacts with NDPK2, AP2C1, MKP1 and PTP1. Interacts with DSPTP1B/MKP2, especially during HR-like responses triggered by fungal elicitors. Interacts with MKK4, MKK5 and MKK6. Binds to LIP5. Interacts with VQ4 and IKU1/VQ14. Interacts with RACK1A, RACK1B and RACK1C. Interacts with PTP1. Interacts with FLZ9. Binds to BASL and YDA. Dually phosphorylated on Thr-221 and Tyr-223, which activates the enzyme. Dephosphorylated by DSPTP1B/MKP2.

It localises to the cytoplasm. It is found in the nucleus. The protein resides in the cell cortex. The enzyme catalyses L-seryl-[protein] + ATP = O-phospho-L-seryl-[protein] + ADP + H(+). The catalysed reaction is L-threonyl-[protein] + ATP = O-phospho-L-threonyl-[protein] + ADP + H(+). Activated by threonine and tyrosine phosphorylation. Activated by the MAP kinase kinases MKK2, MKK3, MKK4, MKK5, MKK7 and MKK9. Activated in response to touch, wounding, low temperature, low humidity, salt stress, hydrogen peroxide, ozone, ACC (an ethylene precursor), jasmonic acid (JA), mastoparan and UVC. Activated in response to elicitors: oligogalacturonides, hexameric chitin fragments, fungal xylanase, and the bacterial flagellin and harpin. Activated upon Pseudomonas syringae pv. tomato DC3000 infection. Repressed by the protein phosphatase 2C AP2C1 and the protein-tyrosine-phosphatases MKP1 and PTP1. Repressed by DSPTP1B/MKP2-mediated dephosphorylation. Activated by polarized BASL. Triggered by MKKK20 in response to various abiotic stresses, including osmotic stress, cold and reactive oxygen species (ROS). Activated by MKK5 in response to abscisic acid (ABA). Mitogen-activated protein kinase (MAPK) which regulates abscisic acid (ABA) responses in a MAPKKK20-MKK5-MPK6 cascade involved in root growth (e.g. root cell division and elongation) and stomatal response. Involved in oxidative stress-mediated signaling cascade (such as ozone). Involved in the innate immune MAP kinase signaling cascade (MEKK1, MKK4/MKK5 and MPK3/MPK6) downstream of bacterial flagellin receptor FLS2. May be involved in hypersensitive response (HR)-mediated signaling cascade by modulating LIP5 phosphorylation and subsequent multivesicular bodies (MVBs) trafficking. May phosphorylate regulators of WRKY transcription factors. Phosphorylates 1-aminocyclopropane-1-carboxylic acid synthases (ACS2 and ACS6) and may be involved in the regulation of bacterial elicitor flagellin-induced ethylene production. Regulates locally gene-mediated and basal resistance response to certain pathogens. May be involved in the cold and salinity stress-mediated MAP kinase signaling cascade (MEKK1, MKK1/MKK2 and MPK4/MPK6). MKK1-MPK6 module mediates abscisic acid (ABA)-dependent CAT1 expression with H(2)O(2) production and response to drought and salt stress. MKK1-MPK6 module is also involved in sugar signaling during the process of seed germination. MKK3-MPK6 module plays an important role in the jasmonate signal transduction pathway through the negative regulation of MYC2/JIN1 expression. MKK9-MPK3/MPK6 module phosphorylates and activates EIN3, leading to the promotion of EIN3-mediated transcription in ethylene signaling. MPK3/MPK6 cascade regulates camalexin synthesis through transcriptional regulation of the biosynthetic genes after pathogen infection. MKK9-MPK6 module positively regulates leaf senescence. YDA-MKK4/MKK5-MPK3/MPK6 module regulates stomatal cell fate before the guard mother cell (GMC) is specified. When activated, reinforces the feedback loop by phosphorylating BASL, and inhibits stomatal fate by phosphorylating SPCH. This MAPK cascade also functions downstream of the ER receptor in regulating coordinated local cell proliferation, which shapes the morphology of plant organs. The protein is Mitogen-activated protein kinase 6 of Arabidopsis thaliana (Mouse-ear cress).